Reading from the N-terminus, the 277-residue chain is Shikimate dehydrogenase (NADP(+)) (277 aa).

Residues 15-17 (SKS) and Thr62 contribute to the shikimate site. Lys66 (proton acceptor) is an active-site residue. Glu78 is a binding site for NADP(+). Positions 87 and 103 each coordinate shikimate. NADP(+)-binding positions include 127–131 (GAGGA), 151–156 (NRTHEK), and Gly238.

The protein belongs to the shikimate dehydrogenase family. In terms of assembly, homodimer.

The catalysed reaction is shikimate + NADP(+) = 3-dehydroshikimate + NADPH + H(+). The protein operates within metabolic intermediate biosynthesis; chorismate biosynthesis; chorismate from D-erythrose 4-phosphate and phosphoenolpyruvate: step 4/7. Its function is as follows. Involved in the biosynthesis of the chorismate, which leads to the biosynthesis of aromatic amino acids. Catalyzes the reversible NADPH linked reduction of 3-dehydroshikimate (DHSA) to yield shikimate (SA). The protein is Shikimate dehydrogenase (NADP(+)) of Shewanella frigidimarina (strain NCIMB 400).